Here is a 106-residue protein sequence, read N- to C-terminus: Immunity protein CdiI (106 aa).

In terms of assembly, forms a contact-dependent growth inhibition complex of CdiA-CT-NC101, CdiI-NC101 and EF-Tu; the complex is a dimer of heterotrimers.

Its function is as follows. Immunity protein component of a toxin-immunity protein module, which functions as a cellular contact-dependent growth inhibition (CDI) system. CDI modules allow bacteria to communicate with and inhibit the growth of closely related neighboring bacteria in a contact-dependent fashion. Neutralizes the toxic activity of cognate toxin CdiA-NC101 (the C-terminal 154 residue CT fragment). Does not inhibit toxic activity of CdiA from other toxin-immunity modules or strains of E.coli. Mediates dimerization of the ternary CdiA-CT-NC101, CdiI-NC101 and EF-Tu complex; both CdiI molecules contact both EF-Tu molecules. This Escherichia coli (strain NC101) protein is Immunity protein CdiI.